The sequence spans 155 residues: uncharacterized protein (155 aa).

A disordered region spans residues 56 to 79; that stretch reads GEKRPTHRRPYRRTKPYPKRPSML. Residues 60 to 73 are compositionally biased toward basic residues; it reads PTHRRPYRRTKPYP.

This is an uncharacterized protein from Sinorhizobium fredii (strain NBRC 101917 / NGR234).